A 247-amino-acid chain; its full sequence is MPRYRLLVEYDGRPYAGFQAQATLPSVQGAIEAAVKAFCGQEVRIAAAGRTDTGVHATGQVVHVDLDKDWPAQTVFNALNAHLTREAVSILSAEVAEEGWHARFSANERRYLYRILNRRAPPALDKGRVWHMKKDLDHEAMHAAAQHLIGLHDFTTFRDMHCQSKSPVKTLDVARVRRVGEEIHLDFEARSFLHRQVRSMTGTLVEVGAGRWTVDDVKAALEARDRRECGPVAPADGLYLVGVGYGD.

Asp-52 serves as the catalytic Nucleophile. Tyr-111 contacts substrate.

This sequence belongs to the tRNA pseudouridine synthase TruA family. As to quaternary structure, homodimer.

It carries out the reaction uridine(38/39/40) in tRNA = pseudouridine(38/39/40) in tRNA. Its function is as follows. Formation of pseudouridine at positions 38, 39 and 40 in the anticodon stem and loop of transfer RNAs. In Caulobacter vibrioides (strain ATCC 19089 / CIP 103742 / CB 15) (Caulobacter crescentus), this protein is tRNA pseudouridine synthase A.